The primary structure comprises 384 residues: UPF0284 protein alr0297 (384 aa).

It belongs to the UPF0284 family.

This chain is UPF0284 protein alr0297, found in Nostoc sp. (strain PCC 7120 / SAG 25.82 / UTEX 2576).